A 347-amino-acid chain; its full sequence is tRNA N6-adenosine threonylcarbamoyltransferase (347 aa).

Fe cation contacts are provided by H117 and H121. Residues 140 to 144 (LVSGG), D174, G187, D191, and N281 each bind substrate. D309 contacts Fe cation.

Belongs to the KAE1 / TsaD family. Fe(2+) serves as cofactor.

The protein resides in the cytoplasm. The catalysed reaction is L-threonylcarbamoyladenylate + adenosine(37) in tRNA = N(6)-L-threonylcarbamoyladenosine(37) in tRNA + AMP + H(+). Functionally, required for the formation of a threonylcarbamoyl group on adenosine at position 37 (t(6)A37) in tRNAs that read codons beginning with adenine. Is involved in the transfer of the threonylcarbamoyl moiety of threonylcarbamoyl-AMP (TC-AMP) to the N6 group of A37, together with TsaE and TsaB. TsaD likely plays a direct catalytic role in this reaction. This is tRNA N6-adenosine threonylcarbamoyltransferase from Thermobifida fusca (strain YX).